The following is a 119-amino-acid chain: Immunoglobulin heavy variable 3-73 (119 aa).

The first 19 residues, 1–19 (MEFGLSWVFLVAILKGVQC), serve as a signal peptide directing secretion. The segment at 20 to 44 (EVQLVESGGGLVQPGGSLKLSCAAS) is framework-1. An Ig-like domain is found at 20–119 (EVQLVESGGG…EDTAVYYCTR (100 aa)). The cysteines at positions 41 and 117 are disulfide-linked. Residues 45–52 (GFTFSGSA) form a complementarity-determining-1 region. Residues 53–69 (MHWVRQASGKGLEWVGR) are framework-2. Residues 70 to 79 (IRSKANSYAT) are complementarity-determining-2. The interval 80–117 (AYAASVKGRFTISRDDSKNTAYLQMNSLKTEDTAVYYC) is framework-3. Positions 118–119 (TR) are complementarity-determining-3.

Immunoglobulins are composed of two identical heavy chains and two identical light chains; disulfide-linked.

The protein resides in the secreted. It localises to the cell membrane. Its function is as follows. V region of the variable domain of immunoglobulin heavy chains that participates in the antigen recognition. Immunoglobulins, also known as antibodies, are membrane-bound or secreted glycoproteins produced by B lymphocytes. In the recognition phase of humoral immunity, the membrane-bound immunoglobulins serve as receptors which, upon binding of a specific antigen, trigger the clonal expansion and differentiation of B lymphocytes into immunoglobulins-secreting plasma cells. Secreted immunoglobulins mediate the effector phase of humoral immunity, which results in the elimination of bound antigens. The antigen binding site is formed by the variable domain of one heavy chain, together with that of its associated light chain. Thus, each immunoglobulin has two antigen binding sites with remarkable affinity for a particular antigen. The variable domains are assembled by a process called V-(D)-J rearrangement and can then be subjected to somatic hypermutations which, after exposure to antigen and selection, allow affinity maturation for a particular antigen. This is Immunoglobulin heavy variable 3-73 from Homo sapiens (Human).